The sequence spans 210 residues: Uridine kinase (210 aa).

Residue 12–19 participates in ATP binding; that stretch reads GGSGSGKT.

Belongs to the uridine kinase family.

The protein localises to the cytoplasm. The catalysed reaction is uridine + ATP = UMP + ADP + H(+). The enzyme catalyses cytidine + ATP = CMP + ADP + H(+). It participates in pyrimidine metabolism; CTP biosynthesis via salvage pathway; CTP from cytidine: step 1/3. The protein operates within pyrimidine metabolism; UMP biosynthesis via salvage pathway; UMP from uridine: step 1/1. This chain is Uridine kinase, found in Leuconostoc citreum (strain KM20).